Consider the following 332-residue polypeptide: Methionyl-tRNA formyltransferase (332 aa).

114-117 (SLLP) provides a ligand contact to (6S)-5,6,7,8-tetrahydrofolate.

It belongs to the Fmt family.

The enzyme catalyses L-methionyl-tRNA(fMet) + (6R)-10-formyltetrahydrofolate = N-formyl-L-methionyl-tRNA(fMet) + (6S)-5,6,7,8-tetrahydrofolate + H(+). In terms of biological role, attaches a formyl group to the free amino group of methionyl-tRNA(fMet). The formyl group appears to play a dual role in the initiator identity of N-formylmethionyl-tRNA by promoting its recognition by IF2 and preventing the misappropriation of this tRNA by the elongation apparatus. The polypeptide is Methionyl-tRNA formyltransferase (Corynebacterium aurimucosum (strain ATCC 700975 / DSM 44827 / CIP 107346 / CN-1) (Corynebacterium nigricans)).